A 576-amino-acid chain; its full sequence is Septation ring formation regulator EzrA (576 aa).

The Extracellular segment spans residues 1–7 (MSSTVII). Residues 8–26 (LIVVLLVILVAFYAFAILM) traverse the membrane as a helical segment. Residues 27 to 576 (RKKTEDRILA…FKNKPTPDYL (550 aa)) lie on the Cytoplasmic side of the membrane. Coiled-coil stretches lie at residues 105–134 (RARESVADSEAQIEMMEGDVEGIRQGVAQL), 254–305 (ENVN…FERE), and 356–402 (GYQE…IEKN).

Belongs to the EzrA family.

The protein localises to the cell membrane. In terms of biological role, negative regulator of FtsZ ring formation; modulates the frequency and position of FtsZ ring formation. Inhibits FtsZ ring formation at polar sites. Interacts either with FtsZ or with one of its binding partners to promote depolymerization. The sequence is that of Septation ring formation regulator EzrA from Lactococcus lactis subsp. cremoris (strain MG1363).